A 613-amino-acid chain; its full sequence is Dihydroxy-acid dehydratase (613 aa).

Asp-81 is a binding site for Mg(2+). Cys-122 provides a ligand contact to [2Fe-2S] cluster. Asp-123 and Lys-124 together coordinate Mg(2+). The residue at position 124 (Lys-124) is an N6-carboxylysine. Residue Cys-193 coordinates [2Fe-2S] cluster. A Mg(2+)-binding site is contributed by Glu-489. Ser-515 acts as the Proton acceptor in catalysis.

The protein belongs to the IlvD/Edd family. Homodimer. [2Fe-2S] cluster serves as cofactor. It depends on Mg(2+) as a cofactor.

The enzyme catalyses (2R)-2,3-dihydroxy-3-methylbutanoate = 3-methyl-2-oxobutanoate + H2O. It carries out the reaction (2R,3R)-2,3-dihydroxy-3-methylpentanoate = (S)-3-methyl-2-oxopentanoate + H2O. It functions in the pathway amino-acid biosynthesis; L-isoleucine biosynthesis; L-isoleucine from 2-oxobutanoate: step 3/4. The protein operates within amino-acid biosynthesis; L-valine biosynthesis; L-valine from pyruvate: step 3/4. Functions in the biosynthesis of branched-chain amino acids. Catalyzes the dehydration of (2R,3R)-2,3-dihydroxy-3-methylpentanoate (2,3-dihydroxy-3-methylvalerate) into 2-oxo-3-methylpentanoate (2-oxo-3-methylvalerate) and of (2R)-2,3-dihydroxy-3-methylbutanoate (2,3-dihydroxyisovalerate) into 2-oxo-3-methylbutanoate (2-oxoisovalerate), the penultimate precursor to L-isoleucine and L-valine, respectively. This Pseudomonas putida (strain GB-1) protein is Dihydroxy-acid dehydratase.